Reading from the N-terminus, the 247-residue chain is 1-(5-phosphoribosyl)-5-[(5-phosphoribosylamino)methylideneamino] imidazole-4-carboxamide isomerase (247 aa).

D8 acts as the Proton acceptor in catalysis. D130 acts as the Proton donor in catalysis.

The protein belongs to the HisA/HisF family.

The protein localises to the cytoplasm. The catalysed reaction is 1-(5-phospho-beta-D-ribosyl)-5-[(5-phospho-beta-D-ribosylamino)methylideneamino]imidazole-4-carboxamide = 5-[(5-phospho-1-deoxy-D-ribulos-1-ylimino)methylamino]-1-(5-phospho-beta-D-ribosyl)imidazole-4-carboxamide. It functions in the pathway amino-acid biosynthesis; L-histidine biosynthesis; L-histidine from 5-phospho-alpha-D-ribose 1-diphosphate: step 4/9. This is 1-(5-phosphoribosyl)-5-[(5-phosphoribosylamino)methylideneamino] imidazole-4-carboxamide isomerase from Stutzerimonas stutzeri (strain A1501) (Pseudomonas stutzeri).